The sequence spans 620 residues: Protein translocase subunit SecD (620 aa).

A run of 6 helical transmembrane segments spans residues 10-30, 464-484, 488-507, 511-533, 555-575, and 582-602; these read YLLILAVLAVGFIYSAPNLYP, LWGMLFVSLFIIVIYRFFGVI, ALAFNMVMLVALMSILGATL, GIAGIVLTMGMAVDANVLIFSRI, FTAILDANLTSLLVGGILYAM, and GFAVTMSLGIITSMFTAIMVT.

This sequence belongs to the SecD/SecF family. SecD subfamily. As to quaternary structure, forms a complex with SecF. Part of the essential Sec protein translocation apparatus which comprises SecA, SecYEG and auxiliary proteins SecDF-YajC and YidC.

The protein resides in the cell inner membrane. Part of the Sec protein translocase complex. Interacts with the SecYEG preprotein conducting channel. SecDF uses the proton motive force (PMF) to complete protein translocation after the ATP-dependent function of SecA. This is Protein translocase subunit SecD from Pseudomonas aeruginosa (strain ATCC 15692 / DSM 22644 / CIP 104116 / JCM 14847 / LMG 12228 / 1C / PRS 101 / PAO1).